A 573-amino-acid chain; its full sequence is DNA ligase (573 aa).

Residue Glu-250 participates in ATP binding. The N6-AMP-lysine intermediate role is filled by Lys-252. Arg-257, Arg-272, Glu-301, Phe-342, Arg-432, and Lys-438 together coordinate ATP.

Belongs to the ATP-dependent DNA ligase family. The cofactor is Mg(2+).

It catalyses the reaction ATP + (deoxyribonucleotide)n-3'-hydroxyl + 5'-phospho-(deoxyribonucleotide)m = (deoxyribonucleotide)n+m + AMP + diphosphate.. Functionally, DNA ligase that seals nicks in double-stranded DNA during DNA replication, DNA recombination and DNA repair. This chain is DNA ligase, found in Methanococcus maripaludis (strain C5 / ATCC BAA-1333).